The following is a 96-amino-acid chain: DNA-directed RNA polymerase subunit Rpo11 (96 aa).

The protein belongs to the archaeal Rpo11/eukaryotic RPB11/RPC19 RNA polymerase subunit family. Part of the RNA polymerase complex.

It is found in the cytoplasm. The catalysed reaction is RNA(n) + a ribonucleoside 5'-triphosphate = RNA(n+1) + diphosphate. In terms of biological role, DNA-dependent RNA polymerase (RNAP) catalyzes the transcription of DNA into RNA using the four ribonucleoside triphosphates as substrates. This Methanococcus maripaludis (strain C6 / ATCC BAA-1332) protein is DNA-directed RNA polymerase subunit Rpo11.